A 355-amino-acid polypeptide reads, in one-letter code: Acyl-CoA desaturase 1 (355 aa).

The Cytoplasmic segment spans residues 1 to 68; the sequence is MPAHMLQEIS…EGPPPKLEYV (68 aa). Residues 9-20 are compositionally biased toward low complexity; sequence ISSSYTTTTTIT. Residues 9-33 form a disordered region; that stretch reads ISSSYTTTTTITAPPSGNEREKVKT. A helical membrane pass occupies residues 69-89; the sequence is WRNIILMVLLHLGGLYGIILV. A substrate-binding site is contributed by Asn71. At 90–93 the chain is on the lumenal side; the sequence is PSCK. The chain crosses the membrane as a helical span at residues 94 to 114; that stretch reads LYTCLFGIFYYMTSALGITAG. At 115–213 the chain is on the cytoplasmic side; that stretch reads AHRLWSHRTY…EKLVMFQRRY (99 aa). Residues His116 and His121 each contribute to the Fe cation site. Positions 116 to 121 match the Histidine box-1 motif; the sequence is HRLWSH. Positions 144, 151, and 152 each coordinate substrate. 3 residues coordinate Fe cation: His153, His156, and His157. Positions 153 to 157 match the Histidine box-2 motif; it reads HRAHH. Substrate-binding residues include Arg184 and Lys185. A helical membrane pass occupies residues 214–233; it reads YKPGLLLMCFILPTLVPWYC. Topologically, residues 234 to 237 are lumenal; sequence WGET. Residues 238 to 259 traverse the membrane as a helical segment; it reads FVNSLFVSTFLRYTLVLNATWL. Trp258 is a substrate binding site. Topologically, residues 260–355 are cytoplasmic; it reads VNSAAHLYGY…RTGDGSHKSS (96 aa). Fe cation is bound by residues His265, His294, His297, and His298. A Histidine box-3 motif is present at residues 294-298; that stretch reads HNYHH.

Belongs to the fatty acid desaturase type 1 family. The cofactor is Fe(2+). Detected in liver (at protein level). Detected in skin and liver. Detected in sebaceous gland, but not in hair follicle. Detected in white and brown adipose tissue, eyelid, Harderian gland, and at lower levels in Meibomian gland, eyeball and adrenal gland. Highly expressed in liver, and detected at low levels in brain, heart, lung, stomach, skeletal muscle and kidney.

It is found in the endoplasmic reticulum membrane. Its subcellular location is the microsome membrane. It carries out the reaction octadecanoyl-CoA + 2 Fe(II)-[cytochrome b5] + O2 + 2 H(+) = (9Z)-octadecenoyl-CoA + 2 Fe(III)-[cytochrome b5] + 2 H2O. Stearoyl-CoA desaturase that utilizes O(2) and electrons from reduced cytochrome b5 to introduce the first double bond into saturated fatty acyl-CoA substrates. Catalyzes the insertion of a cis double bond at the Delta-9 position into fatty acyl-CoA substrates including palmitoyl-CoA and stearoyl-CoA. Gives rise to a mixture of 16:1 and 18:1 unsaturated fatty acids. Plays an important role in lipid biosynthesis. Plays an important role in regulating the expression of genes that are involved in lipogenesis and in regulating mitochondrial fatty acid oxidation. Plays an important role in body energy homeostasis. Contributes to the biosynthesis of membrane phospholipids, cholesterol esters and triglycerides. Required for normal development of sebaceous glands. Required for the biosynthesis of normal levels of Delta-9 unsaturated fatty acids and 1-alkyl-2,3-diacylglycerol in the Harderian gland. Required for normal production of meibum, an oily material that prevents drying of the cornea. This is Acyl-CoA desaturase 1 (Scd1) from Mus musculus (Mouse).